Reading from the N-terminus, the 161-residue chain is Nucleotide-binding protein RC1_3464 (161 aa).

This sequence belongs to the YajQ family.

Nucleotide-binding protein. This is Nucleotide-binding protein RC1_3464 from Rhodospirillum centenum (strain ATCC 51521 / SW).